The primary structure comprises 558 residues: Membrane protein insertase YidC (558 aa).

5 helical membrane passes run 3 to 23 (IKRT…FDNW), 364 to 384 (FVGN…AVFF), 438 to 458 (LPVV…LASV), 477 to 497 (PYFI…KLNP), and 508 to 528 (MMFM…GLVL).

This sequence belongs to the OXA1/ALB3/YidC family. Type 1 subfamily. As to quaternary structure, interacts with the Sec translocase complex via SecD. Specifically interacts with transmembrane segments of nascent integral membrane proteins during membrane integration.

It localises to the cell inner membrane. Required for the insertion and/or proper folding and/or complex formation of integral membrane proteins into the membrane. Involved in integration of membrane proteins that insert both dependently and independently of the Sec translocase complex, as well as at least some lipoproteins. Aids folding of multispanning membrane proteins. The chain is Membrane protein insertase YidC from Burkholderia mallei (strain NCTC 10247).